The primary structure comprises 398 residues: Acetate kinase (398 aa).

Asn-7 serves as a coordination point for Mg(2+). Position 14 (Lys-14) interacts with ATP. A substrate-binding site is contributed by Arg-85. Asp-142 functions as the Proton donor/acceptor in the catalytic mechanism. Residues 202-206 (HLGNG), 277-279 (DMR), and 325-329 (GIGEN) contribute to the ATP site. Glu-379 is a Mg(2+) binding site.

The protein belongs to the acetokinase family. In terms of assembly, homodimer. Mg(2+) is required as a cofactor. Mn(2+) serves as cofactor.

It is found in the cytoplasm. It carries out the reaction acetate + ATP = acetyl phosphate + ADP. The protein operates within metabolic intermediate biosynthesis; acetyl-CoA biosynthesis; acetyl-CoA from acetate: step 1/2. Its function is as follows. Catalyzes the formation of acetyl phosphate from acetate and ATP. Can also catalyze the reverse reaction. The polypeptide is Acetate kinase (Deinococcus radiodurans (strain ATCC 13939 / DSM 20539 / JCM 16871 / CCUG 27074 / LMG 4051 / NBRC 15346 / NCIMB 9279 / VKM B-1422 / R1)).